The sequence spans 281 residues: Pantothenate synthetase (281 aa).

30-37 (MGNLHQGH) serves as a coordination point for ATP. Residue histidine 37 is the Proton donor of the active site. A (R)-pantoate-binding site is contributed by glutamine 61. Glutamine 61 provides a ligand contact to beta-alanine. Residue 149-152 (GNKD) participates in ATP binding. Residue glutamine 155 participates in (R)-pantoate binding. Residues isoleucine 178 and 186–189 (MSSR) contribute to the ATP site.

It belongs to the pantothenate synthetase family. In terms of assembly, homodimer.

It localises to the cytoplasm. The catalysed reaction is (R)-pantoate + beta-alanine + ATP = (R)-pantothenate + AMP + diphosphate + H(+). Its pathway is cofactor biosynthesis; (R)-pantothenate biosynthesis; (R)-pantothenate from (R)-pantoate and beta-alanine: step 1/1. In terms of biological role, catalyzes the condensation of pantoate with beta-alanine in an ATP-dependent reaction via a pantoyl-adenylate intermediate. The polypeptide is Pantothenate synthetase (Shewanella baltica (strain OS155 / ATCC BAA-1091)).